Reading from the N-terminus, the 738-residue chain is MSEEHPPIAEANSQPSNGCPVAGGRLNYPVEGGNANREWWPTQLNLQILKKNPPAANPLGEDFDYAKAVQTIDVDQLKADVAKVLTDSQDWWPADFGNYGPMFIRMAWHAAGTYRVGDGRGGAGAGMQRFAPLNSWPDNVLLDRARRLLWPVKKKYGNKLSWADLIVFAGNHAMDTMGFKTFGFAFGREDRWEPEQDVYWGPEHTWLGDERYTGDRDLENPLAAVQMGLIYVNPEGPNGNPDPLAAAIDIRETFGRMAMNDEETAALIVGGHTFGKTHGAGDAGLVGPDPEAAPLEQMGIGWKSAFGSGKGNDAIGSGLEVIWTHTPTKWDNSFLEILYGNEWELTKSPAGAHQWKPKDGGWANSVPMAQGTGKTHPSMLTTDLSMRFDPIYGQITKRWLDHPEELADAYAKAWYKLIHRDLGPLSRYLGPLVPKETLPWQDVIPVSETNVGADDVAELKKQVLASGLTVPQLVSTAWKAAASYRNSDKRGGANGGRIRLQPQAGWESNEPDELAQVIRILEGVQESFNAGDKKISFADLVVLGGAAAVEKAARDAGFDITVPFTPGRGDATQEQTDVESFSYLEPTADGFRNYLGKGAQIPAEYKLIDRANLLALSPPELAVLVGGLRVLGANYQGSELGVLTDRPGTLTNDFFVNLVDMGTEWTPSPADDGTYVGTDRATGASKWTASRVDLVFGANSELRALAEVYAQDDAQEKFAKDFVAAWVKVSDADRFDVR.

Positions 1–24 (MSEEHPPIAEANSQPSNGCPVAGG) are disordered. A cross-link (tryptophyl-tyrosyl-methioninium (Trp-Tyr) (with M-257)) is located at residues 108–231 (WHAAGTYRVG…LAAVQMGLIY (124 aa)). H109 functions as the Proton acceptor in the catalytic mechanism. A cross-link (tryptophyl-tyrosyl-methioninium (Tyr-Met) (with W-108)) is located at residues 231-257 (YVNPEGPNGNPDPLAAAIDIRETFGRM). A heme b-binding site is contributed by H272.

The protein belongs to the peroxidase family. Peroxidase/catalase subfamily. As to quaternary structure, homodimer or homotetramer. The cofactor is heme b. In terms of processing, formation of the three residue Trp-Tyr-Met cross-link is important for the catalase, but not the peroxidase activity of the enzyme.

The enzyme catalyses H2O2 + AH2 = A + 2 H2O. It carries out the reaction 2 H2O2 = O2 + 2 H2O. Functionally, bifunctional enzyme with both catalase and broad-spectrum peroxidase activity. In Mycobacteroides abscessus (strain ATCC 19977 / DSM 44196 / CCUG 20993 / CIP 104536 / JCM 13569 / NCTC 13031 / TMC 1543 / L948) (Mycobacterium abscessus), this protein is Catalase-peroxidase.